Here is a 519-residue protein sequence, read N- to C-terminus: Ubiquitin carboxyl-terminal hydrolase 30 (519 aa).

Residues 1–52 (MSWAPVSTWSRRTPLAACCSAPELPPAGAWKACAAGSLRIGPQGRCKMMKNW) lie on the Mitochondrial intermembrane side of the membrane. Residues 53–73 (GMIGGIAAALAAGIYVLWGPI) form a helical membrane-spanning segment. Residues 74 to 519 (SDRKKYRKGL…HPEDQRAAEK (446 aa)) lie on the Cytoplasmic side of the membrane. The region spanning 85–504 (PGLLNLGNTC…SAYLLFYERI (420 aa)) is the USP domain. Cysteine 94 functions as the Nucleophile in the catalytic mechanism. A disordered region spans residues 379–405 (SKQPANHLSAAEQETTDGKEGGAQNPT). Histidine 455 serves as the catalytic Proton acceptor.

It belongs to the peptidase C19 family.

The protein localises to the mitochondrion outer membrane. The catalysed reaction is Thiol-dependent hydrolysis of ester, thioester, amide, peptide and isopeptide bonds formed by the C-terminal Gly of ubiquitin (a 76-residue protein attached to proteins as an intracellular targeting signal).. Deubiquitinating enzyme that acts as a key inhibitor of mitophagy by counteracting the action of parkin (PRKN). The sequence is that of Ubiquitin carboxyl-terminal hydrolase 30 (usp30) from Xenopus tropicalis (Western clawed frog).